Consider the following 238-residue polypeptide: Urease accessory protein UreG (238 aa).

Positions methionine 1–histidine 15 are enriched in basic and acidic residues. Residues methionine 1 to proline 27 are disordered. Glycine 34–threonine 41 serves as a coordination point for GTP.

Belongs to the SIMIBI class G3E GTPase family. UreG subfamily. Homodimer. UreD, UreF and UreG form a complex that acts as a GTP-hydrolysis-dependent molecular chaperone, activating the urease apoprotein by helping to assemble the nickel containing metallocenter of UreC. The UreE protein probably delivers the nickel.

It localises to the cytoplasm. Functionally, facilitates the functional incorporation of the urease nickel metallocenter. This process requires GTP hydrolysis, probably effectuated by UreG. The chain is Urease accessory protein UreG from Nocardia farcinica (strain IFM 10152).